Here is a 547-residue protein sequence, read N- to C-terminus: Undecaprenyl phosphate-alpha-4-amino-4-deoxy-L-arabinose arabinosyl transferase (547 aa).

The next 11 helical transmembrane spans lie at 1–21 (MKLT…LPLD), 83–103 (FASA…ALQL), 111–131 (FLAG…TYSV), 174–194 (FLTK…PYVI), 205–225 (FGPL…IAVH), 253–273 (APFW…LGLL), 286–306 (ISPE…FFSV), 311–331 (LLTY…ASAV), 346–366 (AWLN…LALS), 378–398 (GALA…FIQL), and 408–428 (SALC…QSLI).

Belongs to the glycosyltransferase 83 family.

It is found in the cell inner membrane. It carries out the reaction 4-amino-4-deoxy-alpha-L-arabinopyranosyl di-trans,octa-cis-undecaprenyl phosphate + lipid IVA = lipid IIA + di-trans,octa-cis-undecaprenyl phosphate.. It functions in the pathway lipopolysaccharide metabolism; 4-amino-4-deoxy-beta-L-arabinose-lipid A biosynthesis. Functionally, catalyzes the transfer of the L-Ara4N moiety of the glycolipid undecaprenyl phosphate-alpha-L-Ara4N to lipid A. The modified arabinose is attached to lipid A and is required for resistance to polymyxin and cationic antimicrobial peptides. The protein is Undecaprenyl phosphate-alpha-4-amino-4-deoxy-L-arabinose arabinosyl transferase of Aeromonas salmonicida (strain A449).